The sequence spans 198 residues: Protein GrpE (198 aa).

Residues 1–58 are disordered; sequence MTEKDQSVNNEEFAEKEDNTAKDSNTDEQIEKTASEDDVQNDSSAVDDKEKEIQQLKE. Basic and acidic residues-rich tracts occupy residues 16 to 35 and 46 to 58; these read KEDNTAKDSNTDEQIEKTAS and VDDKEKEIQQLKE.

This sequence belongs to the GrpE family. In terms of assembly, homodimer.

Its subcellular location is the cytoplasm. In terms of biological role, participates actively in the response to hyperosmotic and heat shock by preventing the aggregation of stress-denatured proteins, in association with DnaK and GrpE. It is the nucleotide exchange factor for DnaK and may function as a thermosensor. Unfolded proteins bind initially to DnaJ; upon interaction with the DnaJ-bound protein, DnaK hydrolyzes its bound ATP, resulting in the formation of a stable complex. GrpE releases ADP from DnaK; ATP binding to DnaK triggers the release of the substrate protein, thus completing the reaction cycle. Several rounds of ATP-dependent interactions between DnaJ, DnaK and GrpE are required for fully efficient folding. In Staphylococcus carnosus (strain TM300), this protein is Protein GrpE.